Consider the following 419-residue polypeptide: MRKIIINGGKALSGEVAVSGAKNSVVALIPAIILADDIVILDGVPAISDVDSLIEIMELMGATVNYHGDTLEIDPRGVQDIPMPYGKINSLRASYYFYGSLLGRFGQAVVGLPGGCDLGPRPIDLHLKAFEAMGVEVSYEGENMNLSTNGQKIHGAHIYMDTVSVGATINTMVAATKAQGKTVIENAAREPEIIDVATLLNNMGAHIRGAGTDIITIQGVQKLHGTRHQVIPDRIEAGTYIALAAAIGKGVKITNVLYEHLESFIAKLEEMGVRMTVEEDAIFVEKQESLKAITIKTSPYPGFATDLQQPLTPLLLKADGRGTIIDTIYEKRINHVPELMRMGADISVIGGQIVYQGPSRLTGAQVKATDLRAGAALVTAGLMAEGKTEITNIEFILRGYASIIAKLTALGADIQLIED.

22–23 (KN) serves as a coordination point for phosphoenolpyruvate. A UDP-N-acetyl-alpha-D-glucosamine-binding site is contributed by Arg92. The Proton donor role is filled by Cys116. The residue at position 116 (Cys116) is a 2-(S-cysteinyl)pyruvic acid O-phosphothioketal. UDP-N-acetyl-alpha-D-glucosamine contacts are provided by residues 121 to 125 (RPIDL), Asp306, and Ile328.

Belongs to the EPSP synthase family. MurA subfamily.

It localises to the cytoplasm. The catalysed reaction is phosphoenolpyruvate + UDP-N-acetyl-alpha-D-glucosamine = UDP-N-acetyl-3-O-(1-carboxyvinyl)-alpha-D-glucosamine + phosphate. The protein operates within cell wall biogenesis; peptidoglycan biosynthesis. Cell wall formation. Adds enolpyruvyl to UDP-N-acetylglucosamine. This is UDP-N-acetylglucosamine 1-carboxyvinyltransferase 2 from Streptococcus pyogenes serotype M3 (strain ATCC BAA-595 / MGAS315).